Reading from the N-terminus, the 218-residue chain is uncharacterized protein (218 aa).

Helical transmembrane passes span 19-39, 92-112, 124-144, 161-181, and 196-216; these read VFGFSEFSIIGFITAVIFTII, FDYALFLTLVGIANIGIVSAV, YGLIAMIATLPLFGSAGMILA, LLFEKIIFAAGMAGETGIAPF, and YILMIHLSSLLLIVRTVEILL.

The protein resides in the cell membrane. This is an uncharacterized protein from Methanocaldococcus jannaschii (strain ATCC 43067 / DSM 2661 / JAL-1 / JCM 10045 / NBRC 100440) (Methanococcus jannaschii).